Consider the following 159-residue polypeptide: MNISIPQIIAAILNFIILLLIVKHFWFDKITAVVDSRQSEIINKIEDTDKNQKLALELKEKNELELSNAKKQGKTIVEEYKSKAENVYEDIVKEAHEEADRIIKKSRLEAERQKKNAEEEIRAEAVELAVLVSSKTLEKTIDDLEHRRLIKDFISKVGI.

The chain crosses the membrane as a helical span at residues 2–22; sequence NISIPQIIAAILNFIILLLIV.

This sequence belongs to the ATPase B chain family. In terms of assembly, F-type ATPases have 2 components, F(1) - the catalytic core - and F(0) - the membrane proton channel. F(1) has five subunits: alpha(3), beta(3), gamma(1), delta(1), epsilon(1). F(0) has three main subunits: a(1), b(2) and c(10-14). The alpha and beta chains form an alternating ring which encloses part of the gamma chain. F(1) is attached to F(0) by a central stalk formed by the gamma and epsilon chains, while a peripheral stalk is formed by the delta and b chains.

It is found in the cell membrane. Functionally, f(1)F(0) ATP synthase produces ATP from ADP in the presence of a proton or sodium gradient. F-type ATPases consist of two structural domains, F(1) containing the extramembraneous catalytic core and F(0) containing the membrane proton channel, linked together by a central stalk and a peripheral stalk. During catalysis, ATP synthesis in the catalytic domain of F(1) is coupled via a rotary mechanism of the central stalk subunits to proton translocation. Its function is as follows. Component of the F(0) channel, it forms part of the peripheral stalk, linking F(1) to F(0). In Clostridium botulinum (strain ATCC 19397 / Type A), this protein is ATP synthase subunit b.